Reading from the N-terminus, the 103-residue chain is Large ribosomal subunit protein bL21 (103 aa).

Belongs to the bacterial ribosomal protein bL21 family. As to quaternary structure, part of the 50S ribosomal subunit. Contacts protein L20.

Its function is as follows. This protein binds to 23S rRNA in the presence of protein L20. The chain is Large ribosomal subunit protein bL21 from Pseudomonas aeruginosa (strain LESB58).